The chain runs to 1264 residues: Kinesin-like protein KIN-14B (1264 aa).

The segment covering 1-10 has biased composition (polar residues); sequence MAEQKSTNMW. The segment at 1–52 is disordered; sequence MAEQKSTNMWNWEVTGFESKKSPSSEEGVHRTPSSMLRRYSIPKNSLPPHSS. Residues 18-30 show a composition bias toward basic and acidic residues; that stretch reads ESKKSPSSEEGVH. Residues 53–84 are a coiled coil; it reads ELASKVQSLKDKVQLAKDDYVGLRQEATDLQE. Residues 138–452 form the Kinesin motor domain; sequence NVKVFCRARP…LNYAARARNT (315 aa). 219 to 226 is a binding site for ATP; the sequence is GQTHAGKT. Coiled coils occupy residues 462 to 511, 545 to 592, and 617 to 640; these read IKKW…YNEV, QLRN…LKSD, and TKKL…ENEK. Residues 588–615 form a disordered region; it reads ALKSDMTRSRDPLEPQPRAAENTLDSSA. A compositionally biased stretch (basic and acidic residues) spans 589-600; it reads LKSDMTRSRDPL. The segment covering 652-668 has biased composition (low complexity); that stretch reads SSTQVSSPSSKASPTVQ. 2 disordered regions span residues 652–684 and 1117–1136; these read SSTQ…SVDK and PEQE…SISS.

This sequence belongs to the TRAFAC class myosin-kinesin ATPase superfamily. Kinesin family. KIN-14 subfamily. In terms of assembly, homodimer and heterodimer with KCA1. Interacts with CDKA-1. Interacts with At4g14310. Expressed in roots, leaves, stems and flowers.

The protein resides in the cell membrane. In terms of biological role, kinesin-like protein required for chloroplast movements and anchor to the plasma membrane. Mediates chloroplast movement via chloroplast actin (cp-actin) filaments. Required for the chloroplast avoidance response under high intensity blue light. Mediates redundantly with CHUP1 the nuclear avoidance response under high intensity blue light. May be involved in division plane determination. This chain is Kinesin-like protein KIN-14B, found in Arabidopsis thaliana (Mouse-ear cress).